A 98-amino-acid polypeptide reads, in one-letter code: Large ribosomal subunit protein uL23 (98 aa).

This sequence belongs to the universal ribosomal protein uL23 family. As to quaternary structure, part of the 50S ribosomal subunit. Contacts protein L29, and trigger factor when it is bound to the ribosome.

Its function is as follows. One of the early assembly proteins it binds 23S rRNA. One of the proteins that surrounds the polypeptide exit tunnel on the outside of the ribosome. Forms the main docking site for trigger factor binding to the ribosome. The polypeptide is Large ribosomal subunit protein uL23 (Roseobacter denitrificans (strain ATCC 33942 / OCh 114) (Erythrobacter sp. (strain OCh 114))).